The following is a 265-amino-acid chain: Very long chain fatty acid elongase 6 (265 aa).

N2 carries N-linked (GlcNAc...) asparagine glycosylation. 7 helical membrane-spanning segments follow: residues 34–51 (FLFS…RHLM), 70–90 (LAVF…YILM), 111–131 (FWAY…IFII), 136–156 (KLIF…WYSY), 159–179 (MVAG…VMYS), 197–217 (FITL…YLVF), and 232–252 (IFWS…FFFE).

It belongs to the ELO family. ELOVL6 subfamily. In terms of processing, N-Glycosylated. As to expression, ubiquitous.

Its subcellular location is the endoplasmic reticulum membrane. It carries out the reaction a very-long-chain acyl-CoA + malonyl-CoA + H(+) = a very-long-chain 3-oxoacyl-CoA + CO2 + CoA. The enzyme catalyses hexadecanoyl-CoA + malonyl-CoA + H(+) = 3-oxooctadecanoyl-CoA + CO2 + CoA. The catalysed reaction is (9Z)-hexadecenoyl-CoA + malonyl-CoA + H(+) = 3-oxo-(11Z)-octadecenoyl-CoA + CO2 + CoA. It catalyses the reaction dodecanoyl-CoA + malonyl-CoA + H(+) = 3-oxotetradecanoyl-CoA + CO2 + CoA. It carries out the reaction tetradecanoyl-CoA + malonyl-CoA + H(+) = 3-oxohexadecanoyl-CoA + CO2 + CoA. The enzyme catalyses (9Z)-octadecenoyl-CoA + malonyl-CoA + H(+) = 3-oxo-(11Z)-eicosenoyl-CoA + CO2 + CoA. The catalysed reaction is (9Z,12Z)-octadecadienoyl-CoA + malonyl-CoA + H(+) = (11Z,14Z)-3-oxoicosa-11,14-dienoyl-CoA + CO2 + CoA. It catalyses the reaction (9Z,12Z,15Z)-octadecatrienoyl-CoA + malonyl-CoA + H(+) = (11Z,14Z,17Z)-3-oxoeicosatrienoyl-CoA + CO2 + CoA. It participates in lipid metabolism; fatty acid biosynthesis. With respect to regulation, the reaction is stimulated by the presence of HSD17B12, the enzyme catalyzing the second step of the elongation cycle. Functionally, catalyzes the first and rate-limiting reaction of the four reactions that constitute the long-chain fatty acids elongation cycle. This endoplasmic reticulum-bound enzymatic process allows the addition of 2 carbons to the chain of long- and very long-chain fatty acids (VLCFAs) per cycle. Condensing enzyme that elongates fatty acids with 12, 14 and 16 carbons with higher activity toward C16:0 acyl-CoAs. Catalyzes the synthesis of unsaturated C16 long chain fatty acids and, to a lesser extent, C18:0 and those with low desaturation degree. May participate in the production of saturated and monounsaturated VLCFAs of different chain lengths that are involved in multiple biological processes as precursors of membrane lipids and lipid mediators. This is Very long chain fatty acid elongase 6 from Homo sapiens (Human).